We begin with the raw amino-acid sequence, 290 residues long: Poly-beta-1,6-N-acetyl-D-glucosamine N-deacetylase (290 aa).

An N-terminal signal peptide occupies residues methionine 1–alanine 28. In terms of domain architecture, NodB homology spans arginine 114 to aspartate 290.

It belongs to the polysaccharide deacetylase family.

Its subcellular location is the secreted. It localises to the cell wall. Catalyzes the N-deacetylation of poly-beta-1,6-N-acetyl-D-glucosamine (PNAG, also referred to as PIA), a biofilm adhesin polysaccharide. N-deacetylation is crucial for attachment of the polysaccharide to the bacterial cell surface; it leads to the introduction of positive charges in the otherwise neutral PIA polymer, allowing electrostatic interactions. The polypeptide is Poly-beta-1,6-N-acetyl-D-glucosamine N-deacetylase (icaB) (Staphylococcus aureus (strain Mu50 / ATCC 700699)).